We begin with the raw amino-acid sequence, 374 residues long: Nucleosome assembly protein 1;3 (374 aa).

The stretch at 26-80 forms a coiled coil; sequence VNALKNKLQNLAGQHSDVLENLTPKIRRRVEVLREIQGKHDEIETKFREERAALE. Serine 41 is subject to Phosphoserine. The short motif at 47–62 is the Nuclear export signal element; that stretch reads LTPKIRRRVEVLREIQ. The Nuclear localization signal motif lies at 222–227; that stretch reads KKKPKK. Acidic residues predominate over residues 299–339; it reads IEGEEFEIDNDDEDDIDEDEDEDEEDEDEDEEEDDEDEEEE. The disordered stretch occupies residues 299 to 374; it reads IEGEEFEIDN…GERPPECKQQ (76 aa). Over residues 343–355 the composition is skewed to basic residues; it reads TKKKPSVLHKKGG. The span at 364–374 shows a compositional bias: basic and acidic residues; that stretch reads QGERPPECKQQ. Position 371 is a cysteine methyl ester (cysteine 371). Cysteine 371 carries the S-farnesyl cysteine lipid modification. Positions 372 to 374 are cleaved as a propeptide — removed in mature form; the sequence is KQQ.

Belongs to the nucleosome assembly protein (NAP) family. As to quaternary structure, can form homomeric and heteromeric protein complexes with NAP1;1, NAP1;2 and NAP1;4. Binds histone H2A and associates with chromatin in vivo. In terms of tissue distribution, ubiquitous.

Its subcellular location is the nucleus. The protein localises to the cytoplasm. Functionally, may modulate chromatin structure by regulation of nucleosome assembly/disassembly. May function in nucleotide excision repair (NER). Involved in somatic homologous recombination. Could be involved in response to abscisic acid (ABA) and to salt stress. This Arabidopsis thaliana (Mouse-ear cress) protein is Nucleosome assembly protein 1;3 (NAP1;3).